The sequence spans 178 residues: Large ribosomal subunit protein uL6 (178 aa).

Belongs to the universal ribosomal protein uL6 family. In terms of assembly, part of the 50S ribosomal subunit.

Its function is as follows. This protein binds to the 23S rRNA, and is important in its secondary structure. It is located near the subunit interface in the base of the L7/L12 stalk, and near the tRNA binding site of the peptidyltransferase center. The protein is Large ribosomal subunit protein uL6 of Maridesulfovibrio salexigens (strain ATCC 14822 / DSM 2638 / NCIMB 8403 / VKM B-1763) (Desulfovibrio salexigens).